A 658-amino-acid polypeptide reads, in one-letter code: Heat shock 70 kDa protein, mitochondrial (658 aa).

The segment at 629–658 is disordered; it reads KLDSSASKSSSTENKENKDNTTEAEFTEKK. The segment covering 631 to 640 has biased composition (low complexity); it reads DSSASKSSST. Residues 641–658 are compositionally biased toward basic and acidic residues; the sequence is ENKENKDNTTEAEFTEKK.

This sequence belongs to the heat shock protein 70 family.

It localises to the mitochondrion. Functionally, may function in protein folding and assembly, and disassembly of protein complexes. This Dictyostelium discoideum (Social amoeba) protein is Heat shock 70 kDa protein, mitochondrial (mhsp70).